The following is a 629-amino-acid chain: Dolichyl-diphosphooligosaccharide--protein glycosyltransferase subunit 2 (629 aa).

A signal peptide spans Met1 to Ala22. The Lumenal segment spans residues Leu23 to Val541. A glycan (N-linked (GlcNAc...) asparagine) is linked at Asn106. Residue Lys154 forms a Glycyl lysine isopeptide (Lys-Gly) (interchain with G-Cter in ubiquitin) linkage. Residues Val542–Ile562 traverse the membrane as a helical segment. Residues Arg563–Asn570 lie on the Cytoplasmic side of the membrane. A helical transmembrane segment spans residues Phe571–Tyr591. Over Trp592–Gln594 the chain is Lumenal. A helical transmembrane segment spans residues Leu595–Gly615. Residues Asn616–His629 are Cytoplasmic-facing.

Belongs to the SWP1 family. Component of the oligosaccharyltransferase (OST) complex. OST exists in two different complex forms which contain common core subunits RPN1, RPN2, OST48, OST4, DAD1 and TMEM258, either STT3A or STT3B as catalytic subunits, and form-specific accessory subunits. STT3A complex assembly occurs through the formation of 3 subcomplexes. Subcomplex 1 contains RPN1 and TMEM258, subcomplex 2 contains the STT3A-specific subunits STT3A, DC2/OSTC, and KCP2 as well as the core subunit OST4, and subcomplex 3 contains RPN2, DAD1, and OST48. The STT3A complex can form stable complexes with the Sec61 complex or with both the Sec61 and TRAP complexes. Interacts with DDI2. Interacts with TMEM35A/NACHO.

Its subcellular location is the endoplasmic reticulum. The protein localises to the endoplasmic reticulum membrane. It participates in protein modification; protein glycosylation. Subunit of the oligosaccharyl transferase (OST) complex that catalyzes the initial transfer of a defined glycan (Glc(3)Man(9)GlcNAc(2) in eukaryotes) from the lipid carrier dolichol-pyrophosphate to an asparagine residue within an Asn-X-Ser/Thr consensus motif in nascent polypeptide chains, the first step in protein N-glycosylation. N-glycosylation occurs cotranslationally and the complex associates with the Sec61 complex at the channel-forming translocon complex that mediates protein translocation across the endoplasmic reticulum (ER). All subunits are required for a maximal enzyme activity. The chain is Dolichyl-diphosphooligosaccharide--protein glycosyltransferase subunit 2 from Sus scrofa (Pig).